The sequence spans 478 residues: MNLTLPMKKQKFLLIISLLILLSLLHQDYHIEAQNSDKVVNLPEQPLNPKISHFSGYVNVNQENTRSLFFWFFEALSESPSTRPLVLWLNGGPGCSSIGYGAASELGPFRVVENGTSLSFNQYSWVQEANMLFLESPVGVGFSYTNSSSDLENLNDAFVAEDAYNFMVAWFARYPQYKSRDFFIAGESYAGHYSPQLAELIYDRNKVQPKDSFINLKGFIVGNPLTDDEYDNKGILEYAWSHAVISDHLYDSAKHNCDFKSSNWSEPCNVAMNTVFTKYKEIDIYNIYAPKCISNSSSGASYLGFGVNDKSPAVKDWFKRVRWFEGYDPCYSNYAEEYFNRVDVRLSLHATTRNVARWKVCNDSILQTYHFTVSSMLPTYSKLIKAGLKIWVYSGDADGRVPVIGSRYCVEALGISVKSEWRSWFHNHQVGGRITEYEGGLTFVTVRGAGHLVPLNKPEEALALFRSFLNGQELPSSP.

The N-terminal stretch at 1–33 is a signal peptide; the sequence is MNLTLPMKKQKFLLIISLLILLSLLHQDYHIEA. 3 cysteine pairs are disulfide-bonded: C95-C361, C257-C268, and C292-C330. Residues N114 and N146 are each glycosylated (N-linked (GlcNAc...) asparagine). S188 is an active-site residue. N-linked (GlcNAc...) asparagine glycans are attached at residues N263, N295, and N362. Catalysis depends on residues D398 and H451.

It belongs to the peptidase S10 family. As to expression, expressed in senescent leaves and flowers.

It localises to the secreted. Its function is as follows. Probable carboxypeptidase. This chain is Serine carboxypeptidase-like 33 (SCPL33), found in Arabidopsis thaliana (Mouse-ear cress).